The chain runs to 298 residues: UDP-N-acetylenolpyruvoylglucosamine reductase (298 aa).

The 165-residue stretch at Arg26–Gly190 folds into the FAD-binding PCMH-type domain. Arg170 is a catalytic residue. Ser219 serves as the catalytic Proton donor. Residue Glu289 is part of the active site.

This sequence belongs to the MurB family. It depends on FAD as a cofactor.

Its subcellular location is the cytoplasm. It catalyses the reaction UDP-N-acetyl-alpha-D-muramate + NADP(+) = UDP-N-acetyl-3-O-(1-carboxyvinyl)-alpha-D-glucosamine + NADPH + H(+). Its pathway is cell wall biogenesis; peptidoglycan biosynthesis. Cell wall formation. In Alkalilimnicola ehrlichii (strain ATCC BAA-1101 / DSM 17681 / MLHE-1), this protein is UDP-N-acetylenolpyruvoylglucosamine reductase.